Consider the following 157-residue polypeptide: MPIDQEKLAKLQKLSANNKVGGTRRKLNKKAGSSAGANKDDTKLQSQLAKLHAVTIDNVAEANFFKDDGKVMHFNKVGVQVAAQHNTSVFYGLPQEKNLQDLFPGIISQLGPEAIQALSQLAAQMEKHEAKAPADAEKKDEAIPELVEGQTFDADVE.

Disordered stretches follow at residues 19–42 (KVGG…KDDT) and 126–157 (EKHE…ADVE). In terms of domain architecture, NAC-A/B spans 38–103 (NKDDTKLQSQ…PQEKNLQDLF (66 aa)). Basic and acidic residues predominate over residues 126–142 (EKHEAKAPADAEKKDEA). The residue at position 151 (T151) is a Phosphothreonine.

This sequence belongs to the NAC-beta family. As to quaternary structure, part of the nascent polypeptide-associated complex (NAC), consisting of EGD2 and either EGD1 or BTT1. NAC associates with ribosomes via EGD1 or BTT1, and with the CCR4-NOT complex.

The protein resides in the cytoplasm. The protein localises to the nucleus. Its function is as follows. Component of the nascent polypeptide-associated complex (NAC), a dynamic component of the ribosomal exit tunnel, protecting the emerging polypeptides from interaction with other cytoplasmic proteins to ensure appropriate nascent protein targeting. The NAC complex also promotes mitochondrial protein import by enhancing productive ribosome interactions with the outer mitochondrial membrane and blocks the inappropriate interaction of ribosomes translating non-secretory nascent polypeptides with translocation sites in the membrane of the endoplasmic reticulum. EGD1 may act as a transcription factor that exert a negative effect on the expression of several genes that are transcribed by RNA polymerase II. The protein is Nascent polypeptide-associated complex subunit beta-1 (EGD1) of Saccharomyces cerevisiae (strain YJM789) (Baker's yeast).